The chain runs to 248 residues: uncharacterized protein (248 aa).

Position 141 (Ser-141) interacts with substrate. The active-site Proton acceptor is Tyr-154.

It belongs to the short-chain dehydrogenases/reductases (SDR) family.

This is an uncharacterized protein from Methylorubrum extorquens (strain ATCC 14718 / DSM 1338 / JCM 2805 / NCIMB 9133 / AM1) (Methylobacterium extorquens).